The primary structure comprises 299 residues: Probable endonuclease 4 (299 aa).

Zn(2+) is bound by residues His69, His110, Glu145, Asp179, His182, His214, Asp227, His229, and Glu259.

Belongs to the AP endonuclease 2 family. Zn(2+) is required as a cofactor.

It carries out the reaction Endonucleolytic cleavage to 5'-phosphooligonucleotide end-products.. Endonuclease IV plays a role in DNA repair. It cleaves phosphodiester bonds at apurinic or apyrimidinic (AP) sites, generating a 3'-hydroxyl group and a 5'-terminal sugar phosphate. The polypeptide is Probable endonuclease 4 (Geobacillus kaustophilus (strain HTA426)).